Here is a 1225-residue protein sequence, read N- to C-terminus: uncharacterized protein (1225 aa).

Residues M1–D15 are compositionally biased toward polar residues. A disordered region spans residues M1–S104. The segment covering P16 to L25 has biased composition (basic and acidic residues). Over residues A43–D65 the composition is skewed to polar residues. The helical transmembrane segment at F167–I187 threads the bilayer. One can recognise an SMP-LTD domain in the interval D217–E422. 3 consecutive C2 domains span residues S413–F534, D559–F668, and K685–M803. S843 carries the phosphoserine modification. The interval P867–T890 is disordered. Over residues S869–T890 the composition is skewed to polar residues. In terms of domain architecture, C2 4 spans R1019–I1137. Residues D1053, D1059, D1107, D1109, and D1115 each coordinate Ca(2+).

Requires Ca(2+) as cofactor.

The protein localises to the endoplasmic reticulum membrane. This is an uncharacterized protein from Schizosaccharomyces pombe (strain 972 / ATCC 24843) (Fission yeast).